We begin with the raw amino-acid sequence, 206 residues long: Threonine efflux protein (206 aa).

A helical membrane pass occupies residues 1 to 21 (MLMLFFTVAMVHIVALMSPGP). Residues 22–43 (DFFFVSQTAVSRSRKEAMMGVL) are Periplasmic-facing. A helical transmembrane segment spans residues 44 to 64 (GITCGVMVWAGVALLGLHLII). At 65–66 (EK) the chain is on the cytoplasmic side. A helical transmembrane segment spans residues 67–87 (MAWLHTIIMVGGGLYLCWMGY). Residues 88-149 (QMLRGALKKQ…VGDNVGAAAR (62 aa)) lie on the Periplasmic side of the membrane. A helical membrane pass occupies residues 150 to 173 (WGIFALITLETLAWFTVVASLFAL). The Cytoplasmic segment spans residues 174-206 (PKMRRGYQRLAKWIDGFAGALFAGFGIHLIISR).

It belongs to the Rht family.

Its subcellular location is the cell inner membrane. Its function is as follows. Conducts the efflux of threonine. In Salmonella typhi, this protein is Threonine efflux protein (rhtC).